A 147-amino-acid chain; its full sequence is MRVLVNNPRAQYDYYLLTGYCAGLVLKGSEVKSLALGQGSLKEAYVFIDKHEVYIKDFSISPYAFSGEFNHPFKRVKKLLLNRNEIKQITARQKQEGLSIIPLKVFFKNGKIKMEIWLAKPKKKFDKREAIKSKTIQRELRQQYGSP.

The protein belongs to the SmpB family.

The protein localises to the cytoplasm. Required for rescue of stalled ribosomes mediated by trans-translation. Binds to transfer-messenger RNA (tmRNA), required for stable association of tmRNA with ribosomes. tmRNA and SmpB together mimic tRNA shape, replacing the anticodon stem-loop with SmpB. tmRNA is encoded by the ssrA gene; the 2 termini fold to resemble tRNA(Ala) and it encodes a 'tag peptide', a short internal open reading frame. During trans-translation Ala-aminoacylated tmRNA acts like a tRNA, entering the A-site of stalled ribosomes, displacing the stalled mRNA. The ribosome then switches to translate the ORF on the tmRNA; the nascent peptide is terminated with the 'tag peptide' encoded by the tmRNA and targeted for degradation. The ribosome is freed to recommence translation, which seems to be the essential function of trans-translation. The polypeptide is SsrA-binding protein (Mycoplasma pneumoniae (strain ATCC 29342 / M129 / Subtype 1) (Mycoplasmoides pneumoniae)).